Reading from the N-terminus, the 493-residue chain is Dipeptide permease D (493 aa).

The next 13 membrane-spanning stretches (helical) occupy residues 14–34 (VVAL…LLIL), 49–69 (ELFS…GYLA), 91–111 (LVLG…AIIV), 138–158 (GGFS…PIAC), 167–187 (WAMG…IFLC), 212–232 (NWGW…VLFW), 235–255 (WSVY…AKIY), 267–287 (LGLI…AQQG), 312–332 (MFQS…AWLV), 344–364 (IWGK…ILTL), 379–399 (LMVL…PVAM), 413–433 (VLTG…AGVI), and 458–478 (VFEQ…LIWL).

It belongs to the major facilitator superfamily. Proton-dependent oligopeptide transporter (POT/PTR) (TC 2.A.17) family. DtpD subfamily.

It is found in the cell inner membrane. Its function is as follows. Probable proton-dependent permease that transports dipeptides. The polypeptide is Dipeptide permease D (Salmonella choleraesuis (strain SC-B67)).